A 317-amino-acid polypeptide reads, in one-letter code: L-lactate dehydrogenase (317 aa).

Residues Val17, Asp38, Lys43, Tyr68, and 82-83 contribute to the NAD(+) site; that span reads GV. Arg91 contacts substrate. NAD(+)-binding positions include Ser104, 121–123, and Ser146; that span reads VSN. 123-126 serves as a coordination point for substrate; that stretch reads NPVD. Residue 151 to 154 coordinates substrate; sequence DTSR. Beta-D-fructose 1,6-bisphosphate-binding residues include Lys156 and His171. His178 acts as the Proton acceptor in catalysis. Tyr224 bears the Phosphotyrosine mark. Thr233 lines the substrate pocket.

The protein belongs to the LDH/MDH superfamily. LDH family. In terms of assembly, homotetramer.

It is found in the cytoplasm. It carries out the reaction (S)-lactate + NAD(+) = pyruvate + NADH + H(+). Its pathway is fermentation; pyruvate fermentation to lactate; (S)-lactate from pyruvate: step 1/1. Its activity is regulated as follows. Allosterically activated by fructose 1,6-bisphosphate (FBP). In terms of biological role, catalyzes the conversion of lactate to pyruvate. This Clostridium perfringens (strain SM101 / Type A) protein is L-lactate dehydrogenase.